Consider the following 185-residue polypeptide: Pap fimbrial major pilin protein (185 aa).

A signal peptide spans 1–22; that stretch reads MIKSVIAGAVAMAVVSFGVNNA. C44 and C83 form a disulfide bridge.

Belongs to the fimbrial protein family.

It localises to the secreted. It is found in the fimbrium. Polymerizes to form the thick (6.8 nm in diameter) rod of the pilus (also called fimbria). The rod is a right-handed helical cylinder with 3.28 PapA subunits per turn. Pili are polar filaments radiating from the surface of the bacterium to a length of 0.5-1.5 micrometers and numbering 100-300 per cell, and enable bacteria to colonize the epithelium of specific host organs. The polypeptide is Pap fimbrial major pilin protein (papA) (Escherichia coli).